The primary structure comprises 955 residues: Thrombospondin-4 (955 aa).

A signal peptide spans 1–24 (MPRRKGLCLFLQMLLLHLYGVCQA). A Laminin G-like domain is found at 25 to 192 (QPNYQVFDLL…MDELKLVMGG (168 aa)). The 40-residue stretch at 281–320 (PKPRCDATSCFRGVRCIDTEGGFQCGPCPEGYTGNGVICT) folds into the EGF-like 1 domain. Disulfide bonds link Cys-285–Cys-296, Cys-290–Cys-305, Cys-308–Cys-319, Cys-325–Cys-336, Cys-330–Cys-345, Cys-348–Cys-372, Cys-378–Cys-392, Cys-386–Cys-401, Cys-404–Cys-416, Cys-422–Cys-435, Cys-429–Cys-445, Cys-447–Cys-458, Cys-474–Cys-479, Cys-484–Cys-504, Cys-520–Cys-540, Cys-543–Cys-563, Cys-579–Cys-599, Cys-602–Cys-622, Cys-640–Cys-660, Cys-680–Cys-700, and Cys-716–Cys-937. Positions 321 to 358 (DVDECRLNPCFLGVRCINTSPGFKCESCPPGYTGSTIQ) constitute an EGF-like 2; calcium-binding domain. Residues 374 to 415 (DTNECENGRNGGCTSNSLCINTMGSFRCGGCKPGYVGDQIKG) form the EGF-like 3; calcium-binding domain. The EGF-like 4 domain occupies 418-459 (PEKSCRHGQNPCHASAQCSEEKDGDVTCTCSVGWAGNGYLCG). TSP type-3 repeat units lie at residues 460–492 (KDTDIDGYPDEALPCPDKNCKKDNCVYVPNSGQ), 493–528 (EDTDKDNIGDACDEDADGDGILNEQDNCVLAANIDQ), 529–551 (KNSDQDIFGDACDNCRLTLNNDQ), 552–587 (RDTDNDGKGDACDDDMDGDGIKNILDNCQRVPNVDQ), 588–610 (KDKDGDGVGDICDSCPDIINPNQ), 611–648 (SDIDNDLVGDSCDTNQDSDGDGHQDSTDNCPTVINSNQ), 649–688 (LDTDKDGIGDECDDDDDNDGIPDTVPPGPDNCKLVPNPGQ), and 689–724 (EDDNNDGVGDVCEADFDQDTVIDRIDVCPENAEITL). N-linked (GlcNAc...) asparagine glycosylation is present at Asn-609. The interval 610–678 (QSDIDNDLVG…IPDTVPPGPD (69 aa)) is disordered. Positions 637–649 (TDNCPTVINSNQL) are enriched in polar residues. A compositionally biased stretch (acidic residues) spans 657-668 (GDECDDDDDNDG). Positions 728-942 (RAYQTVVLDP…LKYRCNDTIP (215 aa)) constitute a TSP C-terminal domain. The N-linked (GlcNAc...) asparagine glycan is linked to Asn-938.

The protein belongs to the thrombospondin family. Homotrimer; disulfide-linked.

The protein resides in the endoplasmic reticulum. It localises to the sarcoplasmic reticulum. Its subcellular location is the secreted. The protein localises to the extracellular space. It is found in the extracellular matrix. Its function is as follows. Adhesive glycoprotein that mediates cell-to-cell and cell-to-matrix interactions and may be involved in various processes including cellular proliferation, migration, adhesion and attachment. May play a role in ER stress response. May participate in the genesis and function of cardiac and skeletal muscle. The sequence is that of Thrombospondin-4 (thbs4) from Xenopus laevis (African clawed frog).